Reading from the N-terminus, the 366-residue chain is tRNA 2-selenouridine synthase (366 aa).

The 125-residue stretch at 12 to 136 (FLSGTPMMDV…MRGFLIDVIE (125 aa)) folds into the Rhodanese domain. Cysteine 95 functions as the S-selanylcysteine intermediate in the catalytic mechanism.

This sequence belongs to the SelU family. In terms of assembly, monomer.

The catalysed reaction is 5-methylaminomethyl-2-thiouridine(34) in tRNA + selenophosphate + (2E)-geranyl diphosphate + H2O + H(+) = 5-methylaminomethyl-2-selenouridine(34) in tRNA + (2E)-thiogeraniol + phosphate + diphosphate. The enzyme catalyses 5-methylaminomethyl-2-thiouridine(34) in tRNA + (2E)-geranyl diphosphate = 5-methylaminomethyl-S-(2E)-geranyl-thiouridine(34) in tRNA + diphosphate. It catalyses the reaction 5-methylaminomethyl-S-(2E)-geranyl-thiouridine(34) in tRNA + selenophosphate + H(+) = 5-methylaminomethyl-2-(Se-phospho)selenouridine(34) in tRNA + (2E)-thiogeraniol. It carries out the reaction 5-methylaminomethyl-2-(Se-phospho)selenouridine(34) in tRNA + H2O = 5-methylaminomethyl-2-selenouridine(34) in tRNA + phosphate. In terms of biological role, involved in the post-transcriptional modification of the uridine at the wobble position (U34) of tRNA(Lys), tRNA(Glu) and tRNA(Gln). Catalyzes the conversion of 2-thiouridine (S2U-RNA) to 2-selenouridine (Se2U-RNA). Acts in a two-step process involving geranylation of 2-thiouridine (S2U) to S-geranyl-2-thiouridine (geS2U) and subsequent selenation of the latter derivative to 2-selenouridine (Se2U) in the tRNA chain. The chain is tRNA 2-selenouridine synthase from Cupriavidus pinatubonensis (strain JMP 134 / LMG 1197) (Cupriavidus necator (strain JMP 134)).